A 103-amino-acid polypeptide reads, in one-letter code: Large ribosomal subunit protein uL24 (103 aa).

This sequence belongs to the universal ribosomal protein uL24 family. Part of the 50S ribosomal subunit.

Its function is as follows. One of two assembly initiator proteins, it binds directly to the 5'-end of the 23S rRNA, where it nucleates assembly of the 50S subunit. One of the proteins that surrounds the polypeptide exit tunnel on the outside of the subunit. The sequence is that of Large ribosomal subunit protein uL24 from Ruthia magnifica subsp. Calyptogena magnifica.